A 669-amino-acid polypeptide reads, in one-letter code: DNA ligase (669 aa).

Residues 34–38 (DAEYD), 83–84 (SL), and E114 each bind NAD(+). K116 serves as the catalytic N6-AMP-lysine intermediate. Residues R137, E171, K287, and K311 each coordinate NAD(+). Positions 405, 408, 423, and 428 each coordinate Zn(2+). Residues 591-669 (NVESYFAGKT…EERFLQELNK (79 aa)) enclose the BRCT domain.

This sequence belongs to the NAD-dependent DNA ligase family. LigA subfamily. Mg(2+) is required as a cofactor. It depends on Mn(2+) as a cofactor.

It carries out the reaction NAD(+) + (deoxyribonucleotide)n-3'-hydroxyl + 5'-phospho-(deoxyribonucleotide)m = (deoxyribonucleotide)n+m + AMP + beta-nicotinamide D-nucleotide.. DNA ligase that catalyzes the formation of phosphodiester linkages between 5'-phosphoryl and 3'-hydroxyl groups in double-stranded DNA using NAD as a coenzyme and as the energy source for the reaction. It is essential for DNA replication and repair of damaged DNA. This Bacillus cereus (strain ZK / E33L) protein is DNA ligase.